The chain runs to 239 residues: Ubiquinone biosynthesis O-methyltransferase (239 aa).

The S-adenosyl-L-methionine site is built by arginine 42, glycine 62, aspartate 83, and methionine 127.

This sequence belongs to the methyltransferase superfamily. UbiG/COQ3 family.

It carries out the reaction a 3-demethylubiquinol + S-adenosyl-L-methionine = a ubiquinol + S-adenosyl-L-homocysteine + H(+). The catalysed reaction is a 3-(all-trans-polyprenyl)benzene-1,2-diol + S-adenosyl-L-methionine = a 2-methoxy-6-(all-trans-polyprenyl)phenol + S-adenosyl-L-homocysteine + H(+). It participates in cofactor biosynthesis; ubiquinone biosynthesis. In terms of biological role, O-methyltransferase that catalyzes the 2 O-methylation steps in the ubiquinone biosynthetic pathway. This Pectobacterium carotovorum subsp. carotovorum (strain PC1) protein is Ubiquinone biosynthesis O-methyltransferase.